We begin with the raw amino-acid sequence, 43 residues long: Cytochrome b559 subunit beta (43 aa).

A helical transmembrane segment spans residues 18–34 (WLAIHGLAIPTVFFLGG). Residue histidine 22 participates in heme binding.

Belongs to the PsbE/PsbF family. In terms of assembly, heterodimer of an alpha subunit and a beta subunit. PSII is composed of 1 copy each of membrane proteins PsbA, PsbB, PsbC, PsbD, PsbE, PsbF, PsbH, PsbI, PsbJ, PsbK, PsbL, PsbM, PsbT, PsbX, PsbY, PsbZ, Psb30/Ycf12, at least 3 peripheral proteins of the oxygen-evolving complex and a large number of cofactors. It forms dimeric complexes. Heme b is required as a cofactor.

It localises to the plastid. The protein localises to the chloroplast thylakoid membrane. Its function is as follows. This b-type cytochrome is tightly associated with the reaction center of photosystem II (PSII). PSII is a light-driven water:plastoquinone oxidoreductase that uses light energy to abstract electrons from H(2)O, generating O(2) and a proton gradient subsequently used for ATP formation. It consists of a core antenna complex that captures photons, and an electron transfer chain that converts photonic excitation into a charge separation. In Trieres chinensis (Marine centric diatom), this protein is Cytochrome b559 subunit beta.